A 342-amino-acid polypeptide reads, in one-letter code: Glycerol-1-phosphate dehydrogenase [NAD(P)+] (342 aa).

NAD(+) contacts are provided by residues 84 to 88 and 106 to 109; these read GRPLD and TSAS. A substrate-binding site is contributed by Asp111. Ser115 is a binding site for NAD(+). Substrate is bound at residue Asp160. Asp160 and His241 together coordinate Zn(2+). His245 contributes to the substrate binding site. Residue His260 coordinates Zn(2+).

The protein belongs to the glycerol-1-phosphate dehydrogenase family. Homodimer. Requires Zn(2+) as cofactor.

The protein resides in the cytoplasm. It carries out the reaction sn-glycerol 1-phosphate + NAD(+) = dihydroxyacetone phosphate + NADH + H(+). The enzyme catalyses sn-glycerol 1-phosphate + NADP(+) = dihydroxyacetone phosphate + NADPH + H(+). It functions in the pathway membrane lipid metabolism; glycerophospholipid metabolism. Its function is as follows. Catalyzes the NAD(P)H-dependent reduction of dihydroxyacetonephosphate (DHAP or glycerone phosphate) to glycerol 1-phosphate (G1P). The G1P thus generated is used as the glycerophosphate backbone of phospholipids in the cellular membranes of Archaea. This Pyrobaculum neutrophilum (strain DSM 2338 / JCM 9278 / NBRC 100436 / V24Sta) (Thermoproteus neutrophilus) protein is Glycerol-1-phosphate dehydrogenase [NAD(P)+].